The chain runs to 390 residues: 1-deoxy-D-xylulose 5-phosphate reductoisomerase (390 aa).

NADPH contacts are provided by Thr10, Gly11, Ser12, Ile13, Gly36, Asn38, and Asn124. Lys125 is a binding site for 1-deoxy-D-xylulose 5-phosphate. An NADPH-binding site is contributed by Glu126. Residue Asp150 participates in Mn(2+) binding. 1-deoxy-D-xylulose 5-phosphate contacts are provided by Ser151, Glu152, Ser176, and His199. Glu152 is a binding site for Mn(2+). Gly205 is an NADPH binding site. Residues Ser212, Asn217, Lys218, and Glu221 each coordinate 1-deoxy-D-xylulose 5-phosphate. Residue Glu221 coordinates Mn(2+).

Belongs to the DXR family. The cofactor is Mg(2+). Mn(2+) serves as cofactor.

It catalyses the reaction 2-C-methyl-D-erythritol 4-phosphate + NADP(+) = 1-deoxy-D-xylulose 5-phosphate + NADPH + H(+). Its pathway is isoprenoid biosynthesis; isopentenyl diphosphate biosynthesis via DXP pathway; isopentenyl diphosphate from 1-deoxy-D-xylulose 5-phosphate: step 1/6. Functionally, catalyzes the NADPH-dependent rearrangement and reduction of 1-deoxy-D-xylulose-5-phosphate (DXP) to 2-C-methyl-D-erythritol 4-phosphate (MEP). The chain is 1-deoxy-D-xylulose 5-phosphate reductoisomerase from Microcystis aeruginosa (strain NIES-843 / IAM M-2473).